The primary structure comprises 164 residues: Choriogonadotropin subunit beta (164 aa).

The N-terminal stretch at 1-20 (MEMLQGLLLCLLLSTGGAWA) is a signal peptide. Intrachain disulfides connect Cys-29–Cys-77, Cys-43–Cys-92, Cys-46–Cys-130, Cys-54–Cys-108, Cys-58–Cys-110, and Cys-113–Cys-120. Asn-50 carries an N-linked (GlcNAc...) asparagine glycan. The segment at 135–164 (FQDSSSKDPPRNLTSPSQLLEPADPPLVPQ) is disordered. A glycan (O-linked (GalNAc...) serine) is linked at Ser-140. The N-linked (GlcNAc...) asparagine glycan is linked to Asn-146. Residue Ser-151 is glycosylated (O-linked (GalNAc...) serine).

It belongs to the glycoprotein hormones subunit beta family. In terms of assembly, heterodimer of a common alpha chain and a unique beta chain which confers biological specificity to thyrotropin, lutropin, follitropin and gonadotropin. In terms of tissue distribution, placenta.

It localises to the secreted. In terms of biological role, stimulates the ovaries to synthesize the steroids that are essential for the maintenance of pregnancy. The chain is Choriogonadotropin subunit beta (CGB) from Callithrix jacchus (White-tufted-ear marmoset).